The sequence spans 117 residues: Small ribosomal subunit protein uS19c (117 aa).

Belongs to the universal ribosomal protein uS19 family.

The protein resides in the plastid. Its function is as follows. Protein S19 forms a complex with S13 that binds strongly to the 16S ribosomal RNA. This is Small ribosomal subunit protein uS19c (rps19) from Helicosporidium sp. subsp. Simulium jonesii (Green alga).